We begin with the raw amino-acid sequence, 78 residues long: Large ribosomal subunit protein bL28 (78 aa).

Belongs to the bacterial ribosomal protein bL28 family.

The polypeptide is Large ribosomal subunit protein bL28 (Acidithiobacillus ferrooxidans (strain ATCC 23270 / DSM 14882 / CIP 104768 / NCIMB 8455) (Ferrobacillus ferrooxidans (strain ATCC 23270))).